Here is a 456-residue protein sequence, read N- to C-terminus: Zinc finger C2HC domain-containing protein 1C (456 aa).

Disordered regions lie at residues 16–46 (MLPHNTTEAPGPHSAKQDSYEQGDSSQQSLK) and 85–113 (YPHCTGISQQDPESDSQGQGNGLFYSSGP). Composition is skewed to polar residues over residues 35–46 (YEQGDSSQQSLK) and 90–102 (GISQQDPESDSQG). The stretch at 211–265 (VQIRRLEAAGESLEEEIRRKQILLRGKLKKTEEELRRIQTQKEQAKENENGELQK) forms a coiled coil. Residues 336-388 (NKIRDPVSEPSVEKFSPPSETPVGALQGSARNSSLSMAPDSSGSSGSIEEPQL) are disordered. Low complexity predominate over residues 368–382 (SSLSMAPDSSGSSGS). The C2HC/C3H-type zinc-finger motif lies at 387–416 (QLGECSHCGRKFLSFRLERHSNICSRMRGS). Cys-391, Cys-394, His-406, and Cys-410 together coordinate Zn(2+).

This sequence belongs to the ZC2HC1 family. Zn(2+) serves as cofactor.

This chain is Zinc finger C2HC domain-containing protein 1C (ZC2HC1C), found in Homo sapiens (Human).